The primary structure comprises 190 residues: Probable RNA-binding protein 18 (190 aa).

In terms of domain architecture, RRM spans 25 to 106; sequence HRLWIGNLDP…KKLVVRWAHA (82 aa). The disordered stretch occupies residues 166–190; it reads VYSYFKPPDKKRTTPYSRTAWKSRR.

The polypeptide is Probable RNA-binding protein 18 (Rbm18) (Mus musculus (Mouse)).